The following is a 502-amino-acid chain: Lysine--tRNA ligase (502 aa).

Mg(2+) contacts are provided by E413 and E420.

Belongs to the class-II aminoacyl-tRNA synthetase family. Homodimer. Requires Mg(2+) as cofactor.

The protein resides in the cytoplasm. The catalysed reaction is tRNA(Lys) + L-lysine + ATP = L-lysyl-tRNA(Lys) + AMP + diphosphate. In Haemophilus influenzae (strain 86-028NP), this protein is Lysine--tRNA ligase.